A 129-amino-acid polypeptide reads, in one-letter code: Lysozyme C-1 (129 aa).

The 129-residue stretch at 1 to 129 (KVFERCELAR…VSSYVEGCTL (129 aa)) folds into the C-type lysozyme domain. 4 cysteine pairs are disulfide-bonded: Cys6–Cys127, Cys30–Cys115, Cys65–Cys81, and Cys77–Cys95. Active-site residues include Glu35 and Asp53.

The protein belongs to the glycosyl hydrolase 22 family. As to quaternary structure, monomer.

The enzyme catalyses Hydrolysis of (1-&gt;4)-beta-linkages between N-acetylmuramic acid and N-acetyl-D-glucosamine residues in a peptidoglycan and between N-acetyl-D-glucosamine residues in chitodextrins.. Lysozymes have primarily a bacteriolytic function; those in tissues and body fluids are associated with the monocyte-macrophage system and enhance the activity of immunoagents. This Capra hircus (Goat) protein is Lysozyme C-1.